The following is a 325-amino-acid chain: tRNA U34 carboxymethyltransferase (325 aa).

Carboxy-S-adenosyl-L-methionine is bound by residues Lys91, Trp105, Lys110, Gly130, 152–154, Met196, Tyr200, and Arg315; that span reads DPS.

The protein belongs to the class I-like SAM-binding methyltransferase superfamily. CmoB family. As to quaternary structure, homotetramer.

It carries out the reaction carboxy-S-adenosyl-L-methionine + 5-hydroxyuridine(34) in tRNA = 5-carboxymethoxyuridine(34) in tRNA + S-adenosyl-L-homocysteine + H(+). Functionally, catalyzes carboxymethyl transfer from carboxy-S-adenosyl-L-methionine (Cx-SAM) to 5-hydroxyuridine (ho5U) to form 5-carboxymethoxyuridine (cmo5U) at position 34 in tRNAs. In Aeromonas hydrophila subsp. hydrophila (strain ATCC 7966 / DSM 30187 / BCRC 13018 / CCUG 14551 / JCM 1027 / KCTC 2358 / NCIMB 9240 / NCTC 8049), this protein is tRNA U34 carboxymethyltransferase.